Here is a 199-residue protein sequence, read N- to C-terminus: Charged multivesicular body protein 1B1 (199 aa).

The stretch at 10–48 forms a coiled coil; it reads NLKFAAKELNRSSKKCDKEEKAEKAKIKKAIQKGNMEVA. Residues 132-156 form an interaction with IST1 region; that stretch reads MEDTMSSTTTLTTPQNQVDMLLQEM. Residues 167–199 are disordered; the sequence is ELPQGQTGSVGTSVASAEQDELSQRLARLRDQV. The segment covering 170-182 has biased composition (polar residues); it reads QGQTGSVGTSVAS. Residues 174–199 form an interaction with SPAST region; that stretch reads GSVGTSVASAEQDELSQRLARLRDQV. Residues 178–199 adopt a coiled-coil conformation; it reads TSVASAEQDELSQRLARLRDQV. The tract at residues 180–196 is interaction with VPS4A, MITD1 and STAMBP; that stretch reads VASAEQDELSQRLARLR. The segment at 180–199 is interaction with VTA1; the sequence is VASAEQDELSQRLARLRDQV. Residues 183–199 are interaction with VPS4B; sequence AEQDELSQRLARLRDQV. The MIT-interacting motif signature appears at 186 to 196; that stretch reads DELSQRLARLR.

The protein belongs to the SNF7 family. As to quaternary structure, probable peripherally associated component of the endosomal sorting required for transport complex III (ESCRT-III). ESCRT-III components are thought to multimerize to form a flat lattice on the perimeter membrane of the endosome. Several assembly forms of ESCRT-III may exist that interact and act sequentially. Interacts with CHMP1A. Interacts with VTA1; the interaction probably involves the open conformation of CHMP1B. Interacts with CHMP2A. Interacts with VPS4A; the interaction is direct. Interacts with VPS4B; the interaction is direct. Interacts with SPAST (via MIT domain); the interaction is direct. Interacts with IST1. Interacts with MITD1. Interacts with STAMBP.

It is found in the cytoplasm. The protein localises to the cytosol. The protein resides in the endosome. Its subcellular location is the late endosome membrane. Its function is as follows. Probable peripherally associated component of the endosomal sorting required for transport complex III (ESCRT-III) which is involved in multivesicular bodies (MVBs) formation and sorting of endosomal cargo proteins into MVBs. MVBs contain intraluminal vesicles (ILVs) that are generated by invagination and scission from the limiting membrane of the endosome and mostly are delivered to lysosomes enabling degradation of membrane proteins, such as stimulated growth factor receptors, lysosomal enzymes and lipids. The MVB pathway appears to require the sequential function of ESCRT-O, -I,-II and -III complexes. ESCRT-III proteins mostly dissociate from the invaginating membrane before the ILV is released. The ESCRT machinery also functions in topologically equivalent membrane fission events, such as the terminal stages of cytokinesis. ESCRT-III proteins are believed to mediate the necessary vesicle extrusion and/or membrane fission activities, possibly in conjunction with the AAA ATPase VPS4. Involved in cytokinesis. Involved in recruiting VPS4A and/or VPS4B and SPAST to the midbody of dividing cells. The chain is Charged multivesicular body protein 1B1 from Mus musculus (Mouse).